Here is a 196-residue protein sequence, read N- to C-terminus: Secreted effector protein SseB (196 aa).

It belongs to the EspA/SseB family. May form a complex with SseC and SseD. Binds to the chaperone SseA.

Its subcellular location is the secreted. It is found in the cell surface. Effector proteins function to alter host cell physiology and promote bacterial survival in host tissues. May act as a translocator that mediates translocation of SPI-2 T3SS effector proteins from intraphagosomal bacterial cells into the host cells. SseB is required for correct localization of SseC and SseD on the bacterial cell surface. The chain is Secreted effector protein SseB (sseB) from Salmonella typhimurium (strain LT2 / SGSC1412 / ATCC 700720).